Reading from the N-terminus, the 217-residue chain is DNA-binding transcriptional activator DevR/DosR (217 aa).

Positions 3–119 (KVFLVDDHEV…ELARAVKDVG (117 aa)) constitute a Response regulatory domain. The residue at position 54 (Asp-54) is a 4-aspartylphosphate. An HTH luxR-type domain is found at 143 to 208 (KQDPLSGLTD…QAAVFATELK (66 aa)). Residues 167–186 (NKQIADRMFLAEKTVKNYVS) constitute a DNA-binding region (H-T-H motif). Residues Thr-198 and Thr-205 each carry the phosphothreonine; by PknH modification.

As to quaternary structure, homodimer. Interacts with NarL. Post-translationally, phosphorylated on Asp-54 by both DevS (DosS) and DosT. Phosphorylated on Thr-198 and Thr-205 by PknH, which enhances DevR dimerization. Aspartate phosphorylation and threonine phosphorylation cooperatively enhance DevR binding to DNA.

It is found in the cytoplasm. The protein resides in the host cytoplasmic vesicle. The protein localises to the host phagosome. Functionally, member of the two-component regulatory system DevR/DevS (also called DosR/DosS) involved in onset of the dormancy response. Regulates an approximately 48-member regulon. When phosphorylated binds and activates the promoter of DevR regulon genes in response to hypoxia. The presence of target DNA increases stability of phospho-DevR in vitro. Activates its own transcription under hypoxic but not aerobic conditions, probably binds as a dimer to tandem binding sites within the devR and hspX promoters. Accepts a phosphate group from DevS (DosS) and from DosT. Does not regulate transcription of dosT. This is DNA-binding transcriptional activator DevR/DosR from Mycobacterium tuberculosis (strain ATCC 25618 / H37Rv).